A 246-amino-acid polypeptide reads, in one-letter code: Phosphonates import ATP-binding protein PhnC (246 aa).

Positions 2-246 constitute an ABC transporter domain; it reads IKFENVSKIY…ILDEVYRKEA (245 aa). Position 35 to 42 (35 to 42) interacts with ATP; it reads GTSGAGKS.

Belongs to the ABC transporter superfamily. Phosphonates importer (TC 3.A.1.9.1) family. The complex is composed of two ATP-binding proteins (PhnC), two transmembrane proteins (PhnE) and a solute-binding protein (PhnD).

Its subcellular location is the cell membrane. The catalysed reaction is phosphonate(out) + ATP + H2O = phosphonate(in) + ADP + phosphate + H(+). Part of the ABC transporter complex PhnCDE involved in phosphonates import. Responsible for energy coupling to the transport system. This Lactococcus lactis subsp. lactis (strain IL1403) (Streptococcus lactis) protein is Phosphonates import ATP-binding protein PhnC.